The primary structure comprises 240 residues: Proteasome subunit alpha (240 aa).

This sequence belongs to the peptidase T1A family. The 20S proteasome core is composed of 14 alpha and 14 beta subunits that assemble into four stacked heptameric rings, resulting in a barrel-shaped structure. The two inner rings, each composed of seven catalytic beta subunits, are sandwiched by two outer rings, each composed of seven alpha subunits. The catalytic chamber with the active sites is on the inside of the barrel. Has a gated structure, the ends of the cylinder being occluded by the N-termini of the alpha-subunits. Is capped at one or both ends by the proteasome regulatory ATPase, PAN.

Its subcellular location is the cytoplasm. The formation of the proteasomal ATPase PAN-20S proteasome complex, via the docking of the C-termini of PAN into the intersubunit pockets in the alpha-rings, triggers opening of the gate for substrate entry. Interconversion between the open-gate and close-gate conformations leads to a dynamic regulation of the 20S proteasome proteolysis activity. In terms of biological role, component of the proteasome core, a large protease complex with broad specificity involved in protein degradation. This Methanoculleus marisnigri (strain ATCC 35101 / DSM 1498 / JR1) protein is Proteasome subunit alpha.